Reading from the N-terminus, the 146-residue chain is MSLKAWLGIDKIQKFGQMVKEIGGVKAVLKKRYLMDATRVGTLVGSDNFGNRYYENNAYFVPRNRWVEFPDKVWLDYDATQVPPEWHSWLHHITDDAPSVKPPPTQDWVLEHKENTSIYADKKYVPYSTTRTKIQGWQPGEKPQFD.

The protein belongs to the complex I NDUFA12 subunit family. In terms of assembly, complex I is composed of 45 different subunits.

It localises to the mitochondrion inner membrane. Accessory subunit of the mitochondrial membrane respiratory chain NADH dehydrogenase (Complex I), that is believed not to be involved in catalysis. Complex I functions in the transfer of electrons from NADH to the respiratory chain. The immediate electron acceptor for the enzyme is believed to be ubiquinone. The sequence is that of Probable NADH dehydrogenase [ubiquinone] 1 alpha subcomplex subunit 12 from Caenorhabditis elegans.